The chain runs to 625 residues: Pyriculol/pyriculariol biosynthesis cluster transcription factor 1 (625 aa).

2 disordered regions span residues Met1–Asp83 and Pro466–Ser496. The segment covering Thr46 to Ser59 has biased composition (low complexity). The segment at residues Lys73–Ala132 is a DNA-binding region (homeobox). Residues Met467–Ser496 are compositionally biased toward polar residues.

Its subcellular location is the nucleus. In terms of biological role, transcriptional regulator; part of the gene cluster that mediates the biosynthesis of pyriculol and pyriculariol, two heptaketides that induce lesion formation upon application on rice leaves but are dispensable for pathogenicity. With TRF1, negatively regulates the expression of the gene cluster and the subsequent pyriculol and pyriculariol production. This Pyricularia oryzae (strain 70-15 / ATCC MYA-4617 / FGSC 8958) (Rice blast fungus) protein is Pyriculol/pyriculariol biosynthesis cluster transcription factor 1.